The following is a 108-amino-acid chain: Protein SMALL AUXIN UP-REGULATED RNA 8 (108 aa).

It belongs to the ARG7 family. As to expression, expressed in seedlings, leaves and flowers.

The protein localises to the cell membrane. Functionally, provide a mechanistic link between auxin and plasma membrane H(+)-ATPases (PM H(+)-ATPases, e.g. AHA1 and AHA2), and triggers PM H(+)-ATPases activity by promoting phosphorylation of their C-terminal autoinhibitory domain as a result of PP2C-D subfamily of type 2C phosphatases inhibition, thus leading to the acidification of the apoplast and the facilitation of solutes and water uptake to drive cell expansion. Triggers plant growth probably by promoting cell elongation. Regulates branch angles and bending. This Arabidopsis thaliana (Mouse-ear cress) protein is Protein SMALL AUXIN UP-REGULATED RNA 8.